The primary structure comprises 124 residues: Ribonuclease pancreatic (124 aa).

Substrate-binding residues include Lys-7 and Arg-10. The Proton acceptor role is filled by His-12. Cystine bridges form between Cys-26-Cys-84, Cys-40-Cys-95, Cys-58-Cys-110, and Cys-65-Cys-72. A glycan (N-linked (GlcNAc...) asparagine) is linked at Asn-34. Substrate is bound by residues 41–45, Lys-66, and Arg-85; that span reads KPVNT. His-119 (proton donor) is an active-site residue.

This sequence belongs to the pancreatic ribonuclease family. In terms of assembly, monomer. Interacts with and forms tight 1:1 complexes with RNH1. Dimerization of two such complexes may occur. Interaction with RNH1 inhibits this protein. In terms of tissue distribution, pancreas.

Its subcellular location is the secreted. It carries out the reaction an [RNA] containing cytidine + H2O = an [RNA]-3'-cytidine-3'-phosphate + a 5'-hydroxy-ribonucleotide-3'-[RNA].. It catalyses the reaction an [RNA] containing uridine + H2O = an [RNA]-3'-uridine-3'-phosphate + a 5'-hydroxy-ribonucleotide-3'-[RNA].. Functionally, endonuclease that catalyzes the cleavage of RNA on the 3' side of pyrimidine nucleotides. Acts on single-stranded and double-stranded RNA. The protein is Ribonuclease pancreatic (RNASE1) of Mesocricetus auratus (Golden hamster).